Here is a 176-residue protein sequence, read N- to C-terminus: Immunity factor for TNT homolog (176 aa).

In terms of assembly, interacts with the tuberculosis necrotizing toxin (TNT) homolog, the C-terminal domain of the outer membrane channel protein CpnT.

Functionally, antitoxin for tuberculosis necrotizing toxin (TNT) homolog. Acts by binding directly to TNT, which inhibits NAD(+) glycohydrolase activity of TNT and protects M.bovis from self-poisoning. The sequence is that of Immunity factor for TNT homolog from Mycobacterium bovis (strain BCG / Pasteur 1173P2).